We begin with the raw amino-acid sequence, 129 residues long: 3-oxo-4,17-pregnadiene-20-carboxyl-CoA hydratase beta subunit (129 aa).

This sequence belongs to the thioester dehydratase family. As to quaternary structure, heterodimer composed of ChsH1 and ChsH2. Two heterodimers combine to form a heterotetramer. The complex interacts with Ltp2 via the DUF35 C-terminal region of ChsH2. The ChsH1-ChsH2-Ltp2 protein complex is composed of two protomers that form a heterohexameric structure through the Ltp2 dimerization interface.

The enzyme catalyses 3-oxochola-4,17-dien-22-oyl-CoA + H2O = 17-hydroxy-3-oxochol-4-en-22-oyl-CoA. It carries out the reaction (2E)-octenoyl-CoA + H2O = 3-hydroxyoctanoyl-CoA. It catalyses the reaction (2E)-decenoyl-CoA + H2O = 3-hydroxydecanoyl-CoA. Its pathway is steroid metabolism; cholesterol degradation. In the absence of the Ltp2 aldolase, ChsH1/ChsH2 can hydrate only about 30% of the 3-OPDC-CoA substrate. Complete turnover requires the presence of Ltp2. Functionally, involved in cholesterol side chain degradation. Catalyzes the hydration of 3-oxo-4,17-pregnadiene-20-carboxyl-CoA (3-OPDC-CoA) to form 17-hydroxy-3-oxo-4-pregnene-20-carboxyl-CoA (17-HOPC-CoA), in the modified beta-oxidation pathway for cholesterol side chain degradation. Can also use octenoyl-CoA and decenoyl-CoA, with lower efficiency. The polypeptide is 3-oxo-4,17-pregnadiene-20-carboxyl-CoA hydratase beta subunit (Mycobacterium tuberculosis (strain ATCC 25618 / H37Rv)).